Here is a 208-residue protein sequence, read N- to C-terminus: 2-phospho-L-lactate guanylyltransferase (208 aa).

It belongs to the CofC family. Homodimer.

It carries out the reaction (2S)-2-phospholactate + GTP + H(+) = (2S)-lactyl-2-diphospho-5'-guanosine + diphosphate. It participates in cofactor biosynthesis; coenzyme F420 biosynthesis. Functionally, guanylyltransferase that catalyzes the activation of (2S)-2-phospholactate (2-PL) as (2S)-lactyl-2-diphospho-5'-guanosine, via the condensation of 2-PL with GTP. It is involved in the biosynthesis of coenzyme F420, a hydride carrier cofactor. The polypeptide is 2-phospho-L-lactate guanylyltransferase (Methanosarcina acetivorans (strain ATCC 35395 / DSM 2834 / JCM 12185 / C2A)).